Here is a 424-residue protein sequence, read N- to C-terminus: MERIRKEIILMERGLHSPAGKKVSNLSDSAGNAVEEALENSHHSGRLSPRPTSASLHNTVGDTPTNGKFEIDNLFHHQHSSDSTSSSEISSLETRKKFSLYSELACREKEADMNSDVDVGCSTLRSPAGVSTTQLKENTNKVYSDNGSSTNTSSNGSNITNLNGNSSSIGNSGSGPDQVRRYRTAFTREQIGRLEKEFYRENYVSRPRRCELAAALNLPETTIKVWFQNRRMKDKRQRLAMSWPHPADPSFYTYMMTHAAATGSLPYPFHSHVPLHYYPHVGVTAAAAAAAATGATPFPTSIRPLDTFRALSHPYSRPELLCSFRHPGLYQSPHGLNSSAATAAAAAAAAAAASTPAGTAPCSCLSCHSNQSGALGPRSASSDFTCTATAQRSESSFLPYSAAVLSKSAAVSPPDQREESSLTR.

Disordered stretches follow at residues 18 to 65 (PAGK…DTPT) and 132 to 178 (TTQL…GPDQ). Polar residues-rich tracts occupy residues 50–65 (RPTS…DTPT) and 132–145 (TTQL…VYSD). The segment covering 146-175 (NGSSTNTSSNGSNITNLNGNSSSIGNSGSG) has biased composition (low complexity). Positions 179–238 (VRRYRTAFTREQIGRLEKEFYRENYVSRPRRCELAAALNLPETTIKVWFQNRRMKDKRQR) form a DNA-binding region, homeobox.

This sequence belongs to the even-skipped homeobox family.

The protein localises to the nucleus. The sequence is that of Homeobox even-skipped homolog protein 2 (EVX2) from Heterodontus francisci (Horn shark).